An 83-amino-acid chain; its full sequence is Homeobox protein DLX-2 (83 aa).

The segment covering 1 to 14 has biased composition (polar residues); sequence STATDSSYYTNQQH. 2 disordered regions span residues 1 to 27 and 63 to 83; these read STATDSSYYTNQQHPAGGGGGGASPYA and PYGTSSSPVNNEPDKEDLEPE.

Belongs to the distal-less homeobox family. In terms of assembly, interacts (via homeobox DNA-binding domain) with POU4F2; this interaction enhances retinal ganglion cell (RGC) differentiation.

The protein localises to the nucleus. Its function is as follows. Acts as a transcriptional activator. Activates transcription of CGA/alpha-GSU, via binding to the downstream activin regulatory element (DARE) in the gene promoter. Plays a role in terminal differentiation of interneurons, such as amacrine and bipolar cells in the developing retina. Likely to play a regulatory role in the development of the ventral forebrain. May play a role in craniofacial patterning and morphogenesis. The polypeptide is Homeobox protein DLX-2 (Dlx2) (Rattus norvegicus (Rat)).